Reading from the N-terminus, the 137-residue chain is Small ribosomal subunit protein uS9c (137 aa).

The protein belongs to the universal ribosomal protein uS9 family.

It localises to the plastid. Its subcellular location is the chloroplast. In Gracilaria tenuistipitata var. liui (Red alga), this protein is Small ribosomal subunit protein uS9c (rps9).